The primary structure comprises 199 residues: Putative pseudouridine methyltransferase (199 aa).

Residues Met132 and Cys186 each coordinate S-adenosyl-L-methionine.

The protein belongs to the methyltransferase superfamily. TrmY family.

It is found in the cytoplasm. This is Putative pseudouridine methyltransferase from Vibrio atlanticus (strain LGP32) (Vibrio splendidus (strain Mel32)).